The following is a 354-amino-acid chain: DNA polymerase IV (354 aa).

A UmuC domain is found at 6-187 (IIHIDCDCFY…LPVARLHGVG (182 aa)). The Mg(2+) site is built by aspartate 10 and aspartate 105. Glutamate 106 is an active-site residue.

This sequence belongs to the DNA polymerase type-Y family. In terms of assembly, monomer. The cofactor is Mg(2+).

The protein resides in the cytoplasm. It carries out the reaction DNA(n) + a 2'-deoxyribonucleoside 5'-triphosphate = DNA(n+1) + diphosphate. Functionally, poorly processive, error-prone DNA polymerase involved in untargeted mutagenesis. Copies undamaged DNA at stalled replication forks, which arise in vivo from mismatched or misaligned primer ends. These misaligned primers can be extended by PolIV. Exhibits no 3'-5' exonuclease (proofreading) activity. May be involved in translesional synthesis, in conjunction with the beta clamp from PolIII. The chain is DNA polymerase IV from Pseudomonas entomophila (strain L48).